The sequence spans 439 residues: General transcription factor IIE subunit 1 (439 aa).

Position 2 is an N-acetylalanine (alanine 2). Residues 14 to 104 form the HTH TFE/IIEalpha-type domain; the sequence is LKRLAKYVIR…NYRTLVNVVK (91 aa). Position 67 is an N6-acetyllysine (lysine 67). Cysteine 129, cysteine 132, cysteine 154, and cysteine 157 together coordinate Zn(2+). The C4-type zinc finger occupies 129 to 157; the sequence is CPVCSSTFTDLEANQLFDPMTGTFRCTFC. Serine 268 is modified (phosphoserine). The span at 333–344 shows a compositional bias: low complexity; it reads SSAMAGSVGAAA. The disordered stretch occupies residues 333–392; the sequence is SSAMAGSVGAAAPVTTANGSDSESETSESDDDSPPRPAAVAVHKREEDEEEDDEFEEVAD. Composition is skewed to acidic residues over residues 354–364 and 379–392; these read SESETSESDDD and EDEEEDDEFEEVAD.

This sequence belongs to the TFIIE alpha subunit family. Tetramer of two alpha and two beta chains. Interacts with TAF6/TAFII80. Interacts with ATF7IP. Interacts with SND1. Part of TBP-based Pol II pre-initiation complex (PIC), in which Pol II core assembles with general transcription factors and other specific initiation factors including GTF2E1, GTF2E2, GTF2F1, GTF2F2, TCEA1, ERCC2, ERCC3, GTF2H2, GTF2H3, GTF2H4, GTF2H5, GTF2A1, GTF2A2, GTF2B and TBP; this large multi-subunit PIC complex mediates DNA unwinding and targets Pol II core to the transcription start site where the first phosphodiester bond forms.

The protein localises to the nucleus. In terms of biological role, recruits TFIIH to the initiation complex and stimulates the RNA polymerase II C-terminal domain kinase and DNA-dependent ATPase activities of TFIIH. Both TFIIH and TFIIE are required for promoter clearance by RNA polymerase. The sequence is that of General transcription factor IIE subunit 1 (GTF2E1) from Pongo abelii (Sumatran orangutan).